The primary structure comprises 179 residues: ATP synthase subunit delta (179 aa).

It belongs to the ATPase delta chain family. As to quaternary structure, F-type ATPases have 2 components, F(1) - the catalytic core - and F(0) - the membrane proton channel. F(1) has five subunits: alpha(3), beta(3), gamma(1), delta(1), epsilon(1). F(0) has three main subunits: a(1), b(2) and c(10-14). The alpha and beta chains form an alternating ring which encloses part of the gamma chain. F(1) is attached to F(0) by a central stalk formed by the gamma and epsilon chains, while a peripheral stalk is formed by the delta and b chains.

The protein resides in the cell inner membrane. In terms of biological role, f(1)F(0) ATP synthase produces ATP from ADP in the presence of a proton or sodium gradient. F-type ATPases consist of two structural domains, F(1) containing the extramembraneous catalytic core and F(0) containing the membrane proton channel, linked together by a central stalk and a peripheral stalk. During catalysis, ATP synthesis in the catalytic domain of F(1) is coupled via a rotary mechanism of the central stalk subunits to proton translocation. This protein is part of the stalk that links CF(0) to CF(1). It either transmits conformational changes from CF(0) to CF(1) or is implicated in proton conduction. In Delftia acidovorans (strain DSM 14801 / SPH-1), this protein is ATP synthase subunit delta.